A 124-amino-acid chain; its full sequence is uncharacterized protein (124 aa).

A helical membrane pass occupies residues 13 to 33 (IIFMALYFVITGIVIRLIGYS).

Its subcellular location is the membrane. This is an uncharacterized protein from Bacillus anthracis.